Here is a 323-residue protein sequence, read N- to C-terminus: Viral cathepsin (323 aa).

The signal sequence occupies residues 1–16 (MNKILFYLFVYAVVKS). The propeptide at 17–112 (AAYDPLKAPN…ILLDQPPGKG (96 aa)) is activation peptide. 3 cysteine pairs are disulfide-bonded: C133/C174, C167/C207, and C262/C310. C136 is a catalytic residue. The N-linked (GlcNAc...) asparagine; by host glycan is linked to N158. Residues H269 and N289 contribute to the active site.

Belongs to the peptidase C1 family. Post-translationally, synthesized as an inactive proenzyme and activated by proteolytic removal of the inhibitory propeptide.

It catalyses the reaction Endopeptidase of broad specificity, hydrolyzing substrates of both cathepsin L and cathepsin B.. Cysteine protease that plays an essential role in host liquefaction to facilitate horizontal transmission of the virus. May participate in the degradation of foreign protein expressed by the baculovirus system. This Bombyx mori (Silk moth) protein is Viral cathepsin (VCATH).